The primary structure comprises 245 residues: 23S rRNA (guanosine-2'-O-)-methyltransferase RlmB (245 aa).

S-adenosyl-L-methionine-binding residues include G197, I217, and L226.

This sequence belongs to the class IV-like SAM-binding methyltransferase superfamily. RNA methyltransferase TrmH family. RlmB subfamily.

The protein localises to the cytoplasm. It carries out the reaction guanosine(2251) in 23S rRNA + S-adenosyl-L-methionine = 2'-O-methylguanosine(2251) in 23S rRNA + S-adenosyl-L-homocysteine + H(+). Functionally, specifically methylates the ribose of guanosine 2251 in 23S rRNA. The protein is 23S rRNA (guanosine-2'-O-)-methyltransferase RlmB of Pasteurella multocida (strain Pm70).